Here is a 195-residue protein sequence, read N- to C-terminus: Putative NADH dehydrogenase/NAD(P)H nitroreductase CC_0061 (195 aa).

Belongs to the nitroreductase family. HadB/RutE subfamily. FMN serves as cofactor.

The polypeptide is Putative NADH dehydrogenase/NAD(P)H nitroreductase CC_0061 (Caulobacter vibrioides (strain ATCC 19089 / CIP 103742 / CB 15) (Caulobacter crescentus)).